A 291-amino-acid polypeptide reads, in one-letter code: Phosphate import ATP-binding protein PstB (291 aa).

Residues 44–286 (VKAREVNVFY…PEEKRTQDYI (243 aa)) form the ABC transporter domain. An ATP-binding site is contributed by 76–83 (GPSGCGKS).

The protein belongs to the ABC transporter superfamily. Phosphate importer (TC 3.A.1.7) family. In terms of assembly, the complex is composed of two ATP-binding proteins (PstB), two transmembrane proteins (PstC and PstA) and a solute-binding protein (PstS).

Its subcellular location is the cell inner membrane. The catalysed reaction is phosphate(out) + ATP + H2O = ADP + 2 phosphate(in) + H(+). Functionally, part of the ABC transporter complex PstSACB involved in phosphate import. Responsible for energy coupling to the transport system. The protein is Phosphate import ATP-binding protein PstB of Chelativorans sp. (strain BNC1).